A 490-amino-acid chain; its full sequence is Cytochrome P450 2C29 (490 aa).

The first 25 residues, 1 to 25, serve as a signal peptide directing secretion; the sequence is MDLVVFLALTLSCLILLSLWRQSSG. An N6-acetyllysine mark is found at Lys249, Lys252, and Lys375. Position 435 (Cys435) interacts with heme.

The protein belongs to the cytochrome P450 family. Heme serves as cofactor. Expressed in liver as well as in extrahepatic tissues including brain, kidney, lung, heart, and intestine.

The protein resides in the endoplasmic reticulum membrane. Its subcellular location is the microsome membrane. It carries out the reaction an organic molecule + reduced [NADPH--hemoprotein reductase] + O2 = an alcohol + oxidized [NADPH--hemoprotein reductase] + H2O + H(+). The enzyme catalyses (5Z,8Z,11Z,14Z)-eicosatetraenoate + reduced [NADPH--hemoprotein reductase] + O2 = 14,15-epoxy-(5Z,8Z,11Z)-eicosatrienoate + oxidized [NADPH--hemoprotein reductase] + H2O + H(+). Its pathway is lipid metabolism; arachidonate metabolism. Its function is as follows. A cytochrome P450 monooxygenase that selectively catalyzes the epoxidation of 14,15 double bond of (5Z,8Z,11Z,14Z)-eicosatetraenoic acid (arachidonate) forming 14,15-epoxyeicosatrienoic acid (14,15-EET) regioisomer. Mechanistically, uses molecular oxygen inserting one oxygen atom into a substrate, and reducing the second into a water molecule, with two electrons provided by NADPH via cytochrome P450 reductase (CPR; NADPH--hemoprotein reductase). The chain is Cytochrome P450 2C29 from Mus musculus (Mouse).